The following is a 92-amino-acid chain: Large ribosomal subunit protein uL23c (92 aa).

This sequence belongs to the universal ribosomal protein uL23 family. In terms of assembly, part of the 50S ribosomal subunit.

It localises to the plastid. It is found in the chloroplast. Binds to 23S rRNA. In Chara vulgaris (Common stonewort), this protein is Large ribosomal subunit protein uL23c (rpl23).